The chain runs to 1226 residues: Integrin alpha pat-2 (1226 aa).

The first 25 residues, 1 to 25 (MREGSFPRRIGLLLGLLGLLAGVAT), serve as a signal peptide directing secretion. Residues 26–1154 (FNIDTKNVVV…IASEEGRDLP (1129 aa)) lie on the Extracellular side of the membrane. 7 FG-GAP repeats span residues 27-94 (NIDT…TCRE), 108-171 (NGSH…NAEE), 178-233 (EPAR…TDRP), 234-290 (NTEY…MMIN), 291-345 (LTDE…KPQY), 362-421 (GKQI…GVRE), and 425-488 (QKIE…PESA). Residues Asn108, Asn228, and Asn290 are each glycosylated (N-linked (GlcNAc...) asparagine). A glycan (N-linked (GlcNAc...) asparagine) is linked at Asn608. A Cell attachment site motif is present at residues 620–622 (RGD). An N-linked (GlcNAc...) asparagine glycan is attached at Asn679. Residues 709–733 (SVGGDGSKSAPACSPTSDEPDSDGK) are disordered. Residues Asn775 and Asn819 are each glycosylated (N-linked (GlcNAc...) asparagine). Disordered stretches follow at residues 898–958 (LRIT…HVYE) and 982–1040 (DYEY…ARFS). A compositionally biased stretch (acidic residues) spans 920-931 (REEDDESYEDET). Over residues 932 to 951 (TTQSQSTRHQSTQHQTHHQS) the composition is skewed to low complexity. Acidic residues predominate over residues 985–1005 (YIPDDQEYDGDDFEEEDDEDF). The span at 1010–1026 (SKRVKRNPTPKKKKKGG) shows a compositional bias: basic residues. Over residues 1027 to 1040 (EHRGEPRSDKARFS) the composition is skewed to basic and acidic residues. Residues 1155–1177 (WWLYLLAILIGLAILILLILLLW) traverse the membrane as a helical segment. The Cytoplasmic segment spans residues 1178–1226 (RCGFFKRNRPPTEHAELRADRQPNAQYADSQSRYTSQDQYNQGRHGQML). Residues 1191–1226 (HAELRADRQPNAQYADSQSRYTSQDQYNQGRHGQML) are disordered. The span at 1200–1226 (PNAQYADSQSRYTSQDQYNQGRHGQML) shows a compositional bias: polar residues.

The protein belongs to the integrin alpha chain family. Heterodimer of an alpha and a beta subunit. Interacts with beta subunit pat-3. Interacts with dep-1. Component of an integrin containing attachment complex, composed of at least pat-2, pat-3, pat-4, pat-6, unc-52, unc-97 and unc-112. Expressed in body-wall muscle cells, distal tip cells, and vulval tissue.

Its subcellular location is the membrane. Required for muscle development probably through the regulation of the actin-myosin cytoskeleton. Component of an integrin containing attachment complex, which is required for muscle maintenance. During the formation of neuromuscular junctions at the larval stage, negatively regulates membrane protrusion from body wall muscles, probably through lamins such as epi-1, lam-2 and unc-52. Required for distal tip cell migration and dorsal pathfinding. Required for egg-laying. May play a role in cell motility and cell-cell interactions. Plays a role in vulval development. Probably within the alpha pat-2/beta pat-3 integrin receptor complex, plays a role in the negative regulation of let-23 signaling and vulval induction. This is probably partly by restricting the mobility of the let-23 receptor on the plasma membrane of vulval cells which thereby attenuates let-23 signaling. This Caenorhabditis elegans protein is Integrin alpha pat-2.